A 431-amino-acid polypeptide reads, in one-letter code: Enolase (431 aa).

Gln-168 is a binding site for (2R)-2-phosphoglycerate. Glu-210 acts as the Proton donor in catalysis. Mg(2+) contacts are provided by Asp-247, Glu-291, and Asp-318. Residues Lys-343, Arg-372, Ser-373, and Lys-394 each coordinate (2R)-2-phosphoglycerate. Lys-343 functions as the Proton acceptor in the catalytic mechanism.

This sequence belongs to the enolase family. In terms of assembly, component of the RNA degradosome, a multiprotein complex involved in RNA processing and mRNA degradation. Mg(2+) is required as a cofactor.

Its subcellular location is the cytoplasm. The protein resides in the secreted. It localises to the cell surface. The catalysed reaction is (2R)-2-phosphoglycerate = phosphoenolpyruvate + H2O. It participates in carbohydrate degradation; glycolysis; pyruvate from D-glyceraldehyde 3-phosphate: step 4/5. Catalyzes the reversible conversion of 2-phosphoglycerate (2-PG) into phosphoenolpyruvate (PEP). It is essential for the degradation of carbohydrates via glycolysis. The polypeptide is Enolase (Acinetobacter baylyi (strain ATCC 33305 / BD413 / ADP1)).